A 377-amino-acid chain; its full sequence is MTDIKQILTDLIGFPSITPEDAGCQKYMIQFLEQLGFTCQQLNNGPVSNFFACYGKIGPLLVFAGHTDVVPVGEVSKWDTDPFSLEEKSGVLYGRGVADMKGSLACMLHMARRFIKTYPSFPGRLGFLITSGEEGDEFNLGTPYVMQKLEQQGIVIDYCIVGEPSSSLKAGDVIKIGRRGSLSAKIHLSGKQGHVAYPHLADNPIHRISPVLAELTSMQWDNGNAFFPPTSMQITYIHCGGHAGNIIPGELNLHLNFRYSTEQTDESLKTRVINAFTHHNLNPAIEWRLNGEPFLTNKGILLESCKQTVLEHIGTLPELSTSGGTSDGRFIAPYGVEVIELGLVNATIHQVNECTSLQDLNTLETMYFSICEKLLID.

Residue histidine 66 participates in Zn(2+) binding. Aspartate 68 is a catalytic residue. A Zn(2+)-binding site is contributed by aspartate 99. Glutamate 133 functions as the Proton acceptor in the catalytic mechanism. Positions 134, 163, and 349 each coordinate Zn(2+).

This sequence belongs to the peptidase M20A family. DapE subfamily. Homodimer. It depends on Zn(2+) as a cofactor. Co(2+) is required as a cofactor.

The enzyme catalyses N-succinyl-(2S,6S)-2,6-diaminopimelate + H2O = (2S,6S)-2,6-diaminopimelate + succinate. Its pathway is amino-acid biosynthesis; L-lysine biosynthesis via DAP pathway; LL-2,6-diaminopimelate from (S)-tetrahydrodipicolinate (succinylase route): step 3/3. In terms of biological role, catalyzes the hydrolysis of N-succinyl-L,L-diaminopimelic acid (SDAP), forming succinate and LL-2,6-diaminopimelate (DAP), an intermediate involved in the bacterial biosynthesis of lysine and meso-diaminopimelic acid, an essential component of bacterial cell walls. The sequence is that of Succinyl-diaminopimelate desuccinylase from Legionella pneumophila (strain Paris).